The chain runs to 330 residues: uncharacterized protein (330 aa).

This is an uncharacterized protein from Schizosaccharomyces pombe (strain 972 / ATCC 24843) (Fission yeast).